The following is a 209-amino-acid chain: Ribosomal RNA small subunit methyltransferase G (209 aa).

S-adenosyl-L-methionine is bound by residues G71, F76, 122–123, and R135; that span reads AE.

It belongs to the methyltransferase superfamily. RNA methyltransferase RsmG family.

The protein localises to the cytoplasm. Functionally, specifically methylates the N7 position of a guanine in 16S rRNA. This is Ribosomal RNA small subunit methyltransferase G from Flavobacterium psychrophilum (strain ATCC 49511 / DSM 21280 / CIP 103535 / JIP02/86).